Consider the following 252-residue polypeptide: Phosphoglycolate phosphatase (252 aa).

The Nucleophile role is filled by Asp13. Mg(2+) is bound by residues Asp13, Asp15, and Asp192.

It belongs to the HAD-like hydrolase superfamily. CbbY/CbbZ/Gph/YieH family. Monomer. Mg(2+) serves as cofactor. The cofactor is chloride.

It catalyses the reaction 2-phosphoglycolate + H2O = glycolate + phosphate. It functions in the pathway organic acid metabolism; glycolate biosynthesis; glycolate from 2-phosphoglycolate: step 1/1. In terms of biological role, specifically catalyzes the dephosphorylation of 2-phosphoglycolate. Is involved in the dissimilation of the intracellular 2-phosphoglycolate formed during the DNA repair of 3'-phosphoglycolate ends, a major class of DNA lesions induced by oxidative stress. The polypeptide is Phosphoglycolate phosphatase (Shigella boydii serotype 4 (strain Sb227)).